A 398-amino-acid chain; its full sequence is Succinate--CoA ligase [ADP-forming] subunit beta (398 aa).

Residues 9-253 (KQVLAKYGVA…ESEEDPAELE (245 aa)) enclose the ATP-grasp domain. Residues lysine 46, 53-55 (GRG), glutamate 108, cysteine 111, and glutamate 116 each bind ATP. Residues asparagine 208 and aspartate 222 each contribute to the Mg(2+) site. Residues asparagine 273 and 330–332 (GIM) each bind substrate.

This sequence belongs to the succinate/malate CoA ligase beta subunit family. In terms of assembly, heterotetramer of two alpha and two beta subunits. Mg(2+) is required as a cofactor.

It catalyses the reaction succinate + ATP + CoA = succinyl-CoA + ADP + phosphate. It carries out the reaction GTP + succinate + CoA = succinyl-CoA + GDP + phosphate. It participates in carbohydrate metabolism; tricarboxylic acid cycle; succinate from succinyl-CoA (ligase route): step 1/1. In terms of biological role, succinyl-CoA synthetase functions in the citric acid cycle (TCA), coupling the hydrolysis of succinyl-CoA to the synthesis of either ATP or GTP and thus represents the only step of substrate-level phosphorylation in the TCA. The beta subunit provides nucleotide specificity of the enzyme and binds the substrate succinate, while the binding sites for coenzyme A and phosphate are found in the alpha subunit. The polypeptide is Succinate--CoA ligase [ADP-forming] subunit beta (Paramagnetospirillum magneticum (strain ATCC 700264 / AMB-1) (Magnetospirillum magneticum)).